Consider the following 284-residue polypeptide: Tropomyosin beta chain (284 aa).

Residue methionine 1 is modified to N-acetylmethionine. The interval 1–65 (MDAIKKKMQM…EVEKYSESVK (65 aa)) is disordered. Residues 1–284 (MDAIKKKMQM…DNALNDITSL (284 aa)) adopt a coiled-coil conformation. Composition is skewed to basic and acidic residues over residues 12–40 (KLDKENAIDRAEQAEADKKQAEDRCKQLE) and 51–65 (KGTEDEVEKYSESVK). Threonine 53 is modified (phosphothreonine). Serine 61 bears the Phosphoserine; by PIK3CG mark. Position 79 is a phosphothreonine (threonine 79). Serine 87 bears the Phosphoserine mark. Threonine 108 carries the post-translational modification Phosphothreonine. A disordered region spans residues 117–136 (EKAADESERGMKVIENRAMK). 3 positions are modified to phosphoserine: serine 158, serine 206, and serine 215. Threonine 252 carries the post-translational modification Phosphothreonine. A Phosphotyrosine modification is found at tyrosine 261. Residue serine 271 is modified to Phosphoserine. Threonine 282 is modified (phosphothreonine). Serine 283 is subject to Phosphoserine.

The protein belongs to the tropomyosin family. In terms of assembly, homodimer. Heterodimer of an alpha (TPM1, TPM3 or TPM4) and a beta (TPM2) chain. Phosphorylated on Ser-61 by PIK3CG. Phosphorylation on Ser-61 is required for ADRB2 internalization. Present in primary breast cancer tissue, absent from normal breast tissue.

It localises to the cytoplasm. Its subcellular location is the cytoskeleton. Binds to actin filaments in muscle and non-muscle cells. Plays a central role, in association with the troponin complex, in the calcium dependent regulation of vertebrate striated muscle contraction. Smooth muscle contraction is regulated by interaction with caldesmon. In non-muscle cells is implicated in stabilizing cytoskeleton actin filaments. The non-muscle isoform may have a role in agonist-mediated receptor internalization. The chain is Tropomyosin beta chain (TPM2) from Homo sapiens (Human).